Reading from the N-terminus, the 450-residue chain is Growth/differentiation factor 7 (450 aa).

Residues 1–19 form the signal peptide; the sequence is MDLSAAAALCLWLLSACRP. Positions 20–321 are excised as a propeptide; the sequence is RDGLEAAAVL…AVIGGRRRRR (302 aa). An N-linked (GlcNAc...) asparagine glycan is attached at Asn83. Residues 296–349 form a disordered region; the sequence is ASEPLPDPGTGTASPRAVIGGRRRRRTALAGTRTAQGSGGGAGRGHGRRGRSRC. The span at 340–349 shows a compositional bias: basic residues; sequence GHGRRGRSRC. Intrachain disulfides connect Cys349/Cys415, Cys378/Cys447, and Cys382/Cys449.

Belongs to the TGF-beta family. As to quaternary structure, homodimer; disulfide-linked.

Its subcellular location is the secreted. In terms of biological role, may play an active role in the motor area of the primate neocortex. This chain is Growth/differentiation factor 7 (GDF7), found in Homo sapiens (Human).